A 308-amino-acid chain; its full sequence is tRNA pseudouridine synthase B (308 aa).

Aspartate 37 functions as the Nucleophile in the catalytic mechanism.

The protein belongs to the pseudouridine synthase TruB family. Type 1 subfamily.

It catalyses the reaction uridine(55) in tRNA = pseudouridine(55) in tRNA. In terms of biological role, responsible for synthesis of pseudouridine from uracil-55 in the psi GC loop of transfer RNAs. The sequence is that of tRNA pseudouridine synthase B from Deinococcus radiodurans (strain ATCC 13939 / DSM 20539 / JCM 16871 / CCUG 27074 / LMG 4051 / NBRC 15346 / NCIMB 9279 / VKM B-1422 / R1).